The primary structure comprises 29 residues: Cyclotide mden-B (29 aa).

The cyclopeptide (Gly-Asn) cross-link spans 1–29; the sequence is GLPICGETCFTGKCYTPGCTCSYPICKKN. Intrachain disulfides connect C5/C19, C9/C21, and C14/C26.

It belongs to the cyclotide family. Moebius subfamily. In terms of processing, this is a cyclic peptide.

In terms of biological role, probably participates in a plant defense mechanism. This Melicytus dentatus (Tree violet) protein is Cyclotide mden-B.